The following is a 204-amino-acid chain: Holliday junction branch migration complex subunit RuvA (204 aa).

Positions 1–64 are domain I; the sequence is MIGHLTGRLV…EDAHLLFGFS (64 aa). The tract at residues 65–143 is domain II; sequence QKTDRTLFRE…GIQQEDFFIE (79 aa). The flexible linker stretch occupies residues 144–155; the sequence is SQHLKQPEHALN. Positions 156 to 204 are domain III; the sequence is EQDIPASEAISALIALGYKAAEAEKLVKKISKPALSSEQLIREALKAAL.

This sequence belongs to the RuvA family. In terms of assembly, homotetramer. Forms an RuvA(8)-RuvB(12)-Holliday junction (HJ) complex. HJ DNA is sandwiched between 2 RuvA tetramers; dsDNA enters through RuvA and exits via RuvB. An RuvB hexamer assembles on each DNA strand where it exits the tetramer. Each RuvB hexamer is contacted by two RuvA subunits (via domain III) on 2 adjacent RuvB subunits; this complex drives branch migration. In the full resolvosome a probable DNA-RuvA(4)-RuvB(12)-RuvC(2) complex forms which resolves the HJ.

Its subcellular location is the cytoplasm. Functionally, the RuvA-RuvB-RuvC complex processes Holliday junction (HJ) DNA during genetic recombination and DNA repair, while the RuvA-RuvB complex plays an important role in the rescue of blocked DNA replication forks via replication fork reversal (RFR). RuvA specifically binds to HJ cruciform DNA, conferring on it an open structure. The RuvB hexamer acts as an ATP-dependent pump, pulling dsDNA into and through the RuvAB complex. HJ branch migration allows RuvC to scan DNA until it finds its consensus sequence, where it cleaves and resolves the cruciform DNA. In Pasteurella multocida (strain Pm70), this protein is Holliday junction branch migration complex subunit RuvA.